The sequence spans 566 residues: 4-hydroxy-7-methoxy-3-oxo-3,4-dihydro-2H-1,4-benzoxazin-2-yl glucoside beta-D-glucosidase 1, chloroplastic (566 aa).

The transit peptide at 1 to 54 (MAPLLAAAMNHAAAHPGLRSHLVGPNNESFSRHHLPSSSPQSSKRRCNLSFTTR) directs the protein to the chloroplast. Residues 17-47 (GLRSHLVGPNNESFSRHHLPSSSPQSSKRRC) are disordered. Residues Gln92, His196, and 244–245 (NE) contribute to the a beta-D-glucoside site. Residue Glu245 is the Proton donor of the active site. A disulfide bridge connects residues Cys264 and Cys270. The dimerization stretch occupies residues 325 to 361 (SFLDKQAEERSWDINLGWFLEPVVRGDYPFSMRSLAR). An a beta-D-glucoside-binding site is contributed by Tyr387. 2 dimerization regions span residues 394–405 (NIDISPNYSPVL) and 450–453 (KYGN). A beta-D-glucoside-binding positions include Glu460, Trp511, 518–519 (EW), and Tyr527. The active-site Nucleophile is Glu460.

It belongs to the glycosyl hydrolase 1 family. As to quaternary structure, homo- and heterodimer. In terms of tissue distribution, expressed in all seedling parts. Most abundant in the coleoptile.

The protein resides in the plastid. It is found in the chloroplast. It catalyses the reaction Hydrolysis of terminal, non-reducing beta-D-glucosyl residues with release of beta-D-glucose.. It carries out the reaction DIMBOA beta-D-glucoside + H2O = DIMBOA + D-glucose. The catalysed reaction is DIBOA beta-D-glucoside + H2O = DIBOA + D-glucose. Reversibly inhibited by micromolar concentrations of Hg(2+) or Ag(+), but irreversibly inhibited by alkylation in presence of urea. Competitive inhibition by p-nitrophenyl beta-D-thioglucoside (pNPTGlc), glucotetrazole, and para-hydroxy-S-mandelonitrile beta-glucoside (dhurrin). In terms of biological role, is implicated in many functions such as ABA metabolism, hydrolysis of conjugated gibberellins, conversion of storage forms of cytokinins to active forms. Also acts in defense of young plant parts against pests via the production of hydroxamic acids from hydroxamic acid glucosides. Enzymatic activity is highly correlated with plant growth. The preferred substrate is DIMBOA-beta-D-glucoside. Hydrolyzes the chromogenic substrate 6-bromo-2-naphthyl-beta-D-glucoside (6BNGlc) and various artificial aryl beta-glucosides. No activity with cellobiose, arbutin, gentiobiose, linamarin or dhurrin as substrates. The protein is 4-hydroxy-7-methoxy-3-oxo-3,4-dihydro-2H-1,4-benzoxazin-2-yl glucoside beta-D-glucosidase 1, chloroplastic (GLU1) of Zea mays (Maize).